The following is a 637-amino-acid chain: Phospholipase B (637 aa).

Positions 1–19 are cleaved as a signal peptide; it reads MSIITTAFALSLLATTAFA. Residues 46–572 form the PLA2c domain; the sequence is DCPSNVTWIR…DTWCWAGDDN (527 aa). 17 N-linked (GlcNAc...) asparagine glycosylation sites follow: asparagine 50, asparagine 56, asparagine 122, asparagine 231, asparagine 246, asparagine 272, asparagine 314, asparagine 343, asparagine 387, asparagine 433, asparagine 481, asparagine 501, asparagine 528, asparagine 553, asparagine 572, asparagine 594, and asparagine 606.

Belongs to the lysophospholipase family. Post-translationally, N-glycosylated.

Its subcellular location is the secreted. It catalyses the reaction a 1-acyl-sn-glycero-3-phosphocholine + H2O = sn-glycerol 3-phosphocholine + a fatty acid + H(+). Exhibits phospholipase B (PLB), lysophospholipase (LPL) and lysophospholipase/transacylase (LPTA) activities. This Cryptococcus neoformans var. neoformans serotype D (strain B-3501A) (Filobasidiella neoformans) protein is Phospholipase B (PLB1).